A 218-amino-acid chain; its full sequence is Ribose-5-phosphate isomerase A (218 aa).

Substrate is bound by residues 28–31 (SGST), 81–84 (DGAD), and 94–97 (KGGG). The active-site Proton acceptor is E103. K121 contacts substrate.

The protein belongs to the ribose 5-phosphate isomerase family. In terms of assembly, homodimer.

The catalysed reaction is aldehydo-D-ribose 5-phosphate = D-ribulose 5-phosphate. The protein operates within carbohydrate degradation; pentose phosphate pathway; D-ribose 5-phosphate from D-ribulose 5-phosphate (non-oxidative stage): step 1/1. Catalyzes the reversible conversion of ribose-5-phosphate to ribulose 5-phosphate. The protein is Ribose-5-phosphate isomerase A of Dichelobacter nodosus (strain VCS1703A).